The sequence spans 503 residues: Protein ERGIC-53-like (503 aa).

The signal sequence occupies residues 1–25 (MLKTGGLSPSLCLLSLLLALHSAER). The Lumenal portion of the chain corresponds to 26 to 439 (SYPPPQRRFE…WLPGFSTCLR (414 aa)). In terms of domain architecture, L-type lectin-like spans 32-253 (RRFEYKLSFK…DVLSFLTFSL (222 aa)). An intrachain disulfide couples C177 to C216. The chain crosses the membrane as a helical span at residues 440-460 (TSIFLFFLLIQTVGFFCYMNF). The Cytoplasmic segment spans residues 461 to 503 (RQELDKRLQEYLFTESISLQPALPIPRTIGVLRRQPVSPSMQA).

As to expression, predominantly expressed in the sublingual salivary gland, in the mucous cells of the acini, but not in the serous cells, nor in the duct system (at protein level). Not detected in the submandilar, nor the parotid glands. Expressed in the mucous glands, but not detected in the serous glands (at protein level). Besides the salivary glands, expressed in the Brunner's glands in the duodenum, but no other mucous or serous glands (at protein level).

It localises to the endoplasmic reticulum-Golgi intermediate compartment membrane. The sequence is that of Protein ERGIC-53-like (Lman1l) from Rattus norvegicus (Rat).